Consider the following 155-residue polypeptide: Medium/long-chain acyl-CoA thioesterase YigI (155 aa).

The protein belongs to the YigI thioesterase family.

It is found in the cytoplasm. It catalyses the reaction a fatty acyl-CoA + H2O = a fatty acid + CoA + H(+). It carries out the reaction a medium-chain fatty acyl-CoA + H2O = a medium-chain fatty acid + CoA + H(+). The catalysed reaction is a long-chain fatty acyl-CoA + H2O = a long-chain fatty acid + CoA + H(+). In terms of biological role, displays thioesterase activity against medium- to long-chain acyl-CoA substrates. Is involved in the thioesterase-dependent beta-oxidation pathway of (9Z,11E)-octadecadienoate (conjugated linoleic acid or CLA), along with TesB and FadM. The polypeptide is Medium/long-chain acyl-CoA thioesterase YigI (yigI) (Shigella flexneri).